The sequence spans 235 residues: Hydroxyacylglutathione hydrolase (235 aa).

The Zn(2+) site is built by His-53, His-55, Asp-57, His-58, His-109, Asp-127, and His-165.

The protein belongs to the metallo-beta-lactamase superfamily. Glyoxalase II family. In terms of assembly, monomer. Zn(2+) is required as a cofactor.

It catalyses the reaction an S-(2-hydroxyacyl)glutathione + H2O = a 2-hydroxy carboxylate + glutathione + H(+). The protein operates within secondary metabolite metabolism; methylglyoxal degradation; (R)-lactate from methylglyoxal: step 2/2. Its function is as follows. Thiolesterase that catalyzes the hydrolysis of S-D-lactoyl-glutathione to form glutathione and D-lactic acid. In Haemophilus ducreyi (strain 35000HP / ATCC 700724), this protein is Hydroxyacylglutathione hydrolase.